A 250-amino-acid chain; its full sequence is Type III pantothenate kinase (250 aa).

An ATP-binding site is contributed by aspartate 6–valine 13. Position 103–106 (glycine 103–arginine 106) interacts with substrate. The Proton acceptor role is filled by aspartate 105. Aspartate 125 contacts K(+). Threonine 128 contacts ATP. Threonine 180 contacts substrate.

This sequence belongs to the type III pantothenate kinase family. As to quaternary structure, homodimer. The cofactor is NH4(+). K(+) serves as cofactor.

It localises to the cytoplasm. The enzyme catalyses (R)-pantothenate + ATP = (R)-4'-phosphopantothenate + ADP + H(+). It functions in the pathway cofactor biosynthesis; coenzyme A biosynthesis; CoA from (R)-pantothenate: step 1/5. Functionally, catalyzes the phosphorylation of pantothenate (Pan), the first step in CoA biosynthesis. In Frankia casuarinae (strain DSM 45818 / CECT 9043 / HFP020203 / CcI3), this protein is Type III pantothenate kinase.